The primary structure comprises 426 residues: Serine--tRNA ligase (426 aa).

233–235 is a binding site for L-serine; that stretch reads TAE. 264 to 266 provides a ligand contact to ATP; it reads RSE. Position 287 (Glu287) interacts with L-serine. 351-354 is an ATP binding site; the sequence is EISS. Ser387 provides a ligand contact to L-serine.

This sequence belongs to the class-II aminoacyl-tRNA synthetase family. Type-1 seryl-tRNA synthetase subfamily. As to quaternary structure, homodimer. The tRNA molecule binds across the dimer.

It localises to the cytoplasm. The catalysed reaction is tRNA(Ser) + L-serine + ATP = L-seryl-tRNA(Ser) + AMP + diphosphate + H(+). It carries out the reaction tRNA(Sec) + L-serine + ATP = L-seryl-tRNA(Sec) + AMP + diphosphate + H(+). It functions in the pathway aminoacyl-tRNA biosynthesis; selenocysteinyl-tRNA(Sec) biosynthesis; L-seryl-tRNA(Sec) from L-serine and tRNA(Sec): step 1/1. Its function is as follows. Catalyzes the attachment of serine to tRNA(Ser). Is also able to aminoacylate tRNA(Sec) with serine, to form the misacylated tRNA L-seryl-tRNA(Sec), which will be further converted into selenocysteinyl-tRNA(Sec). The chain is Serine--tRNA ligase from Clostridium botulinum (strain Kyoto / Type A2).